The primary structure comprises 159 residues: Deoxyuridine 5'-triphosphate nucleotidohydrolase (159 aa).

The dUMP site is built by S79, G92, D95, Y98, K103, R148, F153, and G154.

It belongs to the dUTPase family. In terms of assembly, homotrimer. It depends on Mg(2+) as a cofactor.

It catalyses the reaction dUTP + H2O = dUMP + diphosphate + H(+). Its pathway is pyrimidine metabolism; dUMP biosynthesis; dUMP from dCTP (dUTP route): step 2/2. Its function is as follows. Involved in nucleotide metabolism via production of dUMP, the immediate precursor of thymidine nucleotides, and decreases the intracellular concentration of dUTP so that uracil cannot be incorporated into DNA. The sequence is that of Deoxyuridine 5'-triphosphate nucleotidohydrolase (DUT1) from Candida albicans (strain SC5314 / ATCC MYA-2876) (Yeast).